The chain runs to 181 residues: Major urinary protein (181 aa).

Positions 1 to 19 (MKLLLLLLCLGLTLVCGHA) are cleaved as a signal peptide. N-linked (GlcNAc...) asparagine glycosylation occurs at Asn-54. An intrachain disulfide couples Cys-83 to Cys-176.

The protein belongs to the calycin superfamily. Lipocalin family. Abundant in the urine of adult male rats but absent from that of females.

It is found in the cytoplasm. The protein localises to the cytosol. It localises to the secreted. Functionally, major urinary proteins (Mups) bind and release pheromones. They may also protect pheromones from oxidation. In this context, they play a role in the regulation of social behaviors, such as aggression, mating, pup-suckling, territory establishment and dominance. Acts as a kairomone, detected by the prey vomeronasal organ and inducing fear reactions in mice. The polypeptide is Major urinary protein (Rattus norvegicus (Rat)).